Consider the following 468-residue polypeptide: Protein NEN1 (468 aa).

The 162-residue stretch at 11–172 (FFDVETTVPK…DDVRMNLEVL (162 aa)) folds into the Exonuclease domain. Positions 13 and 15 each coordinate Mg(2+). The active-site Proton donor/acceptor is the H159. D164 is a Mg(2+) binding site.

Mg(2+) is required as a cofactor. In terms of tissue distribution, expressed in the sieve elements and phloem pole pericycle cells.

Its subcellular location is the cytoplasm. It localises to the nucleus. In terms of biological role, probable exonuclease involved in enuclation of sieve elements. This chain is Protein NEN1, found in Arabidopsis thaliana (Mouse-ear cress).